A 477-amino-acid polypeptide reads, in one-letter code: MTRSVTRPSYDRKALTPGIVHIGVGNFHRAHQAVYLDDLFALGEGHDWAILGAGVRPTDARMREALAAQDNLSTVIELDPAGHRARQVGAMVGFLPVEADNAALIEAMSDPRIRIVSLTVTEGGYYVDASGAFDPTHPDIVADAAHPARPATAFGAILAALRARRDAGVTPFTVMSCDNLPGNGHVTRNAVVGLAELYDAELAGWVKAQVAFPNGMVDRITPATGPHERELAQGFGLADPVPVTCEPFRQWVIEDHFPAGRPALEKVGVTFTPHVHAYEAMKIRILNGGHAVIAYPSALMDIQLVHAAMAHPLIAAFLHKVEVEEILPHVPPVPDTSIPDYLTLIESRFSNPEIADTTRRLCLDGSNRQPKFIVPSLRDNLAAGTVPKGLVLLSALWCRYCFGTTDSGVVVEPNDPNWTALQDRARRAKETPAEWLAMTEVYGDLAQNDLLAAEFAAALEAVWRDGAEAVLRRFLAA.

19-30 (IVHIGVGNFHRA) provides a ligand contact to NAD(+).

The protein belongs to the mannitol dehydrogenase family. In terms of assembly, monomer.

The catalysed reaction is D-mannitol + NAD(+) = D-fructose + NADH + H(+). In Cereibacter sphaeroides (Rhodobacter sphaeroides), this protein is Mannitol 2-dehydrogenase (mtlK).